Consider the following 353-residue polypeptide: Protein RecA (353 aa).

Gly67–Thr74 contacts ATP.

This sequence belongs to the RecA family.

It localises to the cytoplasm. Its function is as follows. Can catalyze the hydrolysis of ATP in the presence of single-stranded DNA, the ATP-dependent uptake of single-stranded DNA by duplex DNA, and the ATP-dependent hybridization of homologous single-stranded DNAs. It interacts with LexA causing its activation and leading to its autocatalytic cleavage. The polypeptide is Protein RecA (Shewanella loihica (strain ATCC BAA-1088 / PV-4)).